Consider the following 132-residue polypeptide: DNA-directed RNA polymerase subunit Rpo8 (132 aa).

Belongs to the archaeal Rpo8 RNA polymerase subunit family. As to quaternary structure, part of the 13-subunit RNA polymerase complex.

It localises to the cytoplasm. The enzyme catalyses RNA(n) + a ribonucleoside 5'-triphosphate = RNA(n+1) + diphosphate. In terms of biological role, DNA-dependent RNA polymerase (RNAP) catalyzes the transcription of DNA into RNA using the four ribonucleoside triphosphates as substrates. In Saccharolobus solfataricus (strain ATCC 35092 / DSM 1617 / JCM 11322 / P2) (Sulfolobus solfataricus), this protein is DNA-directed RNA polymerase subunit Rpo8.